Consider the following 131-residue polypeptide: D-ribose pyranase (131 aa).

Residue histidine 20 is the Proton donor of the active site. Residues aspartate 28, histidine 98, and 120–122 (YAN) each bind substrate.

The protein belongs to the RbsD / FucU family. RbsD subfamily. Homodecamer.

It localises to the cytoplasm. It catalyses the reaction beta-D-ribopyranose = beta-D-ribofuranose. It participates in carbohydrate metabolism; D-ribose degradation; D-ribose 5-phosphate from beta-D-ribopyranose: step 1/2. In terms of biological role, catalyzes the interconversion of beta-pyran and beta-furan forms of D-ribose. In Chloroflexus aggregans (strain MD-66 / DSM 9485), this protein is D-ribose pyranase.